A 100-amino-acid polypeptide reads, in one-letter code: Apolipoprotein C-II (100 aa).

The signal sequence occupies residues 1-22 (MGSRFLLALFLILLVLGCEVQA). The lipid binding stretch occupies residues 66–74 (SVDEKLRDM). The lipoprotein lipase cofactor stretch occupies residues 78-100 (SSAAMTTYASIFTDQILTLLKGE).

It belongs to the apolipoprotein C2 family. Post-translationally, proapolipoprotein C-II is synthesized as a sialic acid containing glycoprotein which is subsequently desialylated prior to its proteolytic processing. In terms of processing, proapolipoprotein C-II, the major form found in plasma undergoes proteolytic cleavage of its N-terminal hexapeptide to generate the mature form apolipoprotein C-II, which occurs as the minor form in plasma.

Its subcellular location is the secreted. Functionally, component of chylomicrons, very low-density lipoproteins (VLDL), low-density lipoproteins (LDL), and high-density lipoproteins (HDL) in plasma. Plays an important role in lipoprotein metabolism as an activator of lipoprotein lipase. This chain is Apolipoprotein C-II (APOC2), found in Microtus ochrogaster (Prairie vole).